The primary structure comprises 227 residues: Flagellar L-ring protein (227 aa).

The signal sequence occupies residues Met-1–Gly-15. Residue Cys-16 is the site of N-palmitoyl cysteine attachment. Residue Cys-16 is the site of S-diacylglycerol cysteine attachment.

It belongs to the FlgH family. In terms of assembly, the basal body constitutes a major portion of the flagellar organelle and consists of four rings (L,P,S, and M) mounted on a central rod.

The protein resides in the cell outer membrane. The protein localises to the bacterial flagellum basal body. Its function is as follows. Assembles around the rod to form the L-ring and probably protects the motor/basal body from shearing forces during rotation. The chain is Flagellar L-ring protein from Syntrophotalea carbinolica (strain DSM 2380 / NBRC 103641 / GraBd1) (Pelobacter carbinolicus).